A 242-amino-acid polypeptide reads, in one-letter code: MILYPAIDLKEGHCVRLLQGDMQKATIFNDDPAAQAAAFEAQGFTALHVVDLDGAFAGKPMNAAAVDAILARVKMSVQLGGGIRDEATIEAWLGKGIARVIIGTAAVRDPDLVRRAAARFPGKIAVGIDAKDGFVAVEGWAKTAQLSAVELGKKFEDAGVAALIYTDIARDGGLTGLNIDATLALAKAVHIPVIASGGLASLADIERLTAPDCAILAGAISGRALYDGRIDPAKALALLRKD.

The Proton acceptor role is filled by D8. Residue D129 is the Proton donor of the active site.

Belongs to the HisA/HisF family.

Its subcellular location is the cytoplasm. The enzyme catalyses 1-(5-phospho-beta-D-ribosyl)-5-[(5-phospho-beta-D-ribosylamino)methylideneamino]imidazole-4-carboxamide = 5-[(5-phospho-1-deoxy-D-ribulos-1-ylimino)methylamino]-1-(5-phospho-beta-D-ribosyl)imidazole-4-carboxamide. The protein operates within amino-acid biosynthesis; L-histidine biosynthesis; L-histidine from 5-phospho-alpha-D-ribose 1-diphosphate: step 4/9. This Beijerinckia indica subsp. indica (strain ATCC 9039 / DSM 1715 / NCIMB 8712) protein is 1-(5-phosphoribosyl)-5-[(5-phosphoribosylamino)methylideneamino] imidazole-4-carboxamide isomerase.